The following is a 250-amino-acid chain: 3-deoxy-manno-octulosonate cytidylyltransferase (250 aa).

The protein belongs to the KdsB family.

The protein localises to the cytoplasm. It catalyses the reaction 3-deoxy-alpha-D-manno-oct-2-ulosonate + CTP = CMP-3-deoxy-beta-D-manno-octulosonate + diphosphate. It functions in the pathway nucleotide-sugar biosynthesis; CMP-3-deoxy-D-manno-octulosonate biosynthesis; CMP-3-deoxy-D-manno-octulosonate from 3-deoxy-D-manno-octulosonate and CTP: step 1/1. It participates in bacterial outer membrane biogenesis; lipopolysaccharide biosynthesis. Its function is as follows. Activates KDO (a required 8-carbon sugar) for incorporation into bacterial lipopolysaccharide in Gram-negative bacteria. In Geobacter sulfurreducens (strain ATCC 51573 / DSM 12127 / PCA), this protein is 3-deoxy-manno-octulosonate cytidylyltransferase.